A 647-amino-acid polypeptide reads, in one-letter code: MRLTLLCCTWREERMGEEGSELPVCASCGQRIYDGQYLQALNADWHADCFRCCECSVSLSHQYYEKDGQLFCKKDYWARYGESCHGCSEHITKGLVMVAGELKYHPECFICLACGNFIGDGDTYTLVEHSKLYCGQCYYQTVVTPVIEQILPDSPGSHLPHTVTLVSIPASAHGKRGLSVSIDPPHGPPGCGTEHSHTVRVQGVDPGCMSPDVKNSIHVGDRILEINGTPIRNVPLDEIDLLIQETSRLLQLTLEHDPHDSLGHGPVSDPSPLSSPVHTPSGQAASSARQKPVLRSCSIDTSPGTSSLASPASQRKDLGRSESLRVVCRPHRIFRPSDLIHGEVLGKGCFGQAIKVTHRETGEVMVMKELIRFDEETQRTFLKEVKVMRCLEHPNVLKFIGVLYKDKRLNFITEYIKGGTLRGIIKNMDSQYPWSQRVSFAKDIASGMAYLHSMNIIHRDLNSHNCLVRENRNVVVADFGLARLMIDEKNQSEDLRSLKKPDRKKRYTVVGNPYWMAPEMINGRSYDEKVDVFSFGIVLCEIIGRVNADPDYLPRTMDFGLNVRGFLDRYCPPNCPPSFFPITVRCCDLDPEKRPSFVKLEQWLETLRMHLSGHLPLGPQLEQLERGFWETYRRGESSLPAHPEVPD.

2 LIM zinc-binding domains span residues 25 to 75 (CASC…CKKD) and 84 to 137 (CHGC…CGQC). One can recognise a PDZ domain in the interval 165-258 (LVSIPASAHG…LLQLTLEHDP (94 aa)). Ser210 is modified (phosphoserine). A Phosphothreonine modification is found at Thr229. The tract at residues 256-319 (HDPHDSLGHG…SPASQRKDLG (64 aa)) is disordered. Over residues 266 to 277 (PVSDPSPLSSPV) the composition is skewed to low complexity. Polar residues-rich tracts occupy residues 278–289 (HTPSGQAASSAR) and 298–313 (SIDT…SPAS). Residues Ser298, Ser302, Ser307, and Ser310 each carry the phosphoserine modification. Ser323 is subject to Phosphoserine; by MAPKAPK2. Ser337 bears the Phosphoserine mark. A Protein kinase domain is found at 339–604 (LIHGEVLGKG…PSFVKLEQWL (266 aa)). ATP is bound by residues 345–353 (LGKGCFGQA) and Lys368. Residue Asp460 is part of the active site. A Phosphothreonine; by ROCK1 modification is found at Thr508.

Belongs to the protein kinase superfamily. TKL Ser/Thr protein kinase family. In terms of assembly, self-associates to form homodimers. Interacts with HSP90AA1; this interaction promotes LIMK1 dimerization and subsequent transphosphorylation. Interacts with CDKN1C. Interacts (via LIM domain) with the cytoplasmic domain of NRG1. Interacts with NISCH. Interacts with SSH1. Interacts with RLIM and RNF6. Interacts (via LIM zinc-binding domains) with FAM89B/LRAP25 (via LRR repeat). Forms a tripartite complex with CDC42BPA, CDC42BPB and FAM89B/LRAP25. Autophosphorylated. Phosphorylated on Thr-508 by ROCK1 and PAK1, resulting in activation. Phosphorylated by PAK4 which increases the ability of LIMK1 to phosphorylate cofilin. Phosphorylated at Ser-323 by MAPKAPK2 during activation of VEGFA-induced signaling, which results in activation of LIMK1 and promotion of actin reorganization, cell migration, and tubule formation of endothelial cells. Dephosphorylated and inactivated by SSH1. Phosphorylated by CDC42BP. Post-translationally, ubiquitinated. 'Lys-48'-linked polyubiquitination by RNF6 leads to proteasomal degradation through the 26S proteasome, modulating LIMK1 levels in the growth cone and its effect on axonal outgrowth. Also polyubiquitinated by RLIM. Highest expression in the nervous system, particularly in the spinal cord and the cranial nerve and dorsal root ganglia.

The protein resides in the cytoplasm. It is found in the nucleus. It localises to the cytoskeleton. Its subcellular location is the cell projection. The protein localises to the lamellipodium. The enzyme catalyses L-seryl-[protein] + ATP = O-phospho-L-seryl-[protein] + ADP + H(+). It carries out the reaction L-threonyl-[protein] + ATP = O-phospho-L-threonyl-[protein] + ADP + H(+). Serine/threonine-protein kinase that plays an essential role in the regulation of actin filament dynamics. Acts downstream of several Rho family GTPase signal transduction pathways. Activated by upstream kinases including ROCK1, PAK1 and PAK4, which phosphorylate LIMK1 on a threonine residue located in its activation loop. LIMK1 subsequently phosphorylates and inactivates the actin binding/depolymerizing factors cofilin-1/CFL1, cofilin-2/CFL2 and destrin/DSTN, thereby preventing the cleavage of filamentous actin (F-actin), and stabilizing the actin cytoskeleton. In this way LIMK1 regulates several actin-dependent biological processes including cell motility, cell cycle progression, and differentiation. Phosphorylates TPPP on serine residues, thereby promoting microtubule disassembly. Stimulates axonal outgrowth and may be involved in brain development. In Mus musculus (Mouse), this protein is LIM domain kinase 1 (Limk1).